Reading from the N-terminus, the 136-residue chain is Histone H3.3C (136 aa).

The disordered stretch occupies residues 1 to 42 (MARTKQTARKSTGGKAPRKQLVTKAAKKCAPATGGVKKPHRY). Arg-3 bears the Asymmetric dimethylarginine; by PRMT6 mark. Thr-4 is subject to Phosphothreonine; by HASPIN. Allysine; alternate is present on Lys-5. Position 5 is an N6,N6,N6-trimethyllysine; alternate (Lys-5). Lys-5 bears the N6,N6-dimethyllysine; alternate mark. Lys-5 is subject to N6-(2-hydroxyisobutyryl)lysine; alternate. Residue Lys-5 is modified to N6-acetyllysine; alternate. The residue at position 5 (Lys-5) is an N6-methyllysine; alternate. Gln-6 is modified (5-glutamyl dopamine; alternate). Gln-6 bears the 5-glutamyl serotonin; alternate mark. Position 7 is a phosphothreonine; by PKC (Thr-7). An N6-(2-hydroxyisobutyryl)lysine; alternate modification is found at Lys-10. Position 10 is an N6-lactoyllysine; alternate (Lys-10). The residue at position 10 (Lys-10) is an N6-methylated lysine. An ADP-ribosylserine; alternate modification is found at Ser-11. Ser-11 is subject to Phosphoserine; alternate; by AURKB, AURKC, RPS6KA3, RPS6KA4 and RPS6KA5. Thr-12 bears the Phosphothreonine; by PKC mark. Residue Lys-15 is modified to N6-(2-hydroxyisobutyryl)lysine; alternate. The residue at position 15 (Lys-15) is an N6-lactoyllysine; alternate. Lys-15 carries the post-translational modification N6-acetyllysine. Lys-15 is subject to N6-glutaryllysine; alternate. Arg-18 is modified (asymmetric dimethylarginine). 4 positions are modified to N6-(2-hydroxyisobutyryl)lysine; alternate: Lys-19, Lys-24, Lys-28, and Lys-37. An N6-acetyllysine; alternate modification is found at Lys-19. Residues Lys-19, Lys-24, and Lys-28 each carry the N6-lactoyllysine; alternate modification. N6-glutaryllysine; alternate occurs at positions 19, 24, and 28. Residues Lys-19 and Lys-24 each carry the N6-butyryllysine; alternate modification. The residue at position 19 (Lys-19) is an N6-methylated lysine; alternate. Lys-24 is modified (N6-acetyllysine). An N6-acetyllysine; alternate mark is found at Lys-28 and Lys-37. 2 positions are modified to N6-methylated lysine; alternate: Lys-28 and Lys-37. Tyr-42 is subject to Phosphotyrosine. An N6-(2-hydroxyisobutyryl)lysine; alternate modification is found at Lys-57. Position 57 is an N6-lactoyllysine; alternate (Lys-57). At Lys-57 the chain carries N6-glutaryllysine; alternate. Lys-57 is modified (N6-succinyllysine; alternate). Ser-58 bears the Phosphoserine mark. Lys-65 and Lys-80 each carry N6-(2-hydroxyisobutyryl)lysine; alternate. 2 positions are modified to N6-methylated lysine: Lys-65 and Lys-80. Residue Lys-80 is modified to N6-lactoyllysine; alternate. At Lys-80 the chain carries N6-glutaryllysine; alternate. N6-succinyllysine; alternate is present on Lys-80. Thr-81 carries the post-translational modification Phosphothreonine. N6-acetyllysine; alternate is present on residues Lys-116 and Lys-123. Residues Lys-116 and Lys-123 each carry the N6-glutaryllysine; alternate modification. The residue at position 123 (Lys-123) is an N6-(2-hydroxyisobutyryl)lysine; alternate. Lys-123 is modified (N6-methylated lysine; alternate). Lys-123 is modified (N6-succinyllysine; alternate).

It belongs to the histone H3 family. As to quaternary structure, the nucleosome is a histone octamer containing two molecules each of H2A, H2B, H3 and H4 assembled in one H3-H4 heterotetramer and two H2A-H2B heterodimers. The octamer wraps approximately 147 bp of DNA. In terms of processing, acetylation is generally linked to gene activation. Acetylation on Lys-19 (H3K18ac) and Lys-24 (H3K24ac) favors methylation at Arg-18 (H3R17me). Acetylation at Lys-123 (H3K122ac) by EP300/p300 plays a central role in chromatin structure: localizes at the surface of the histone octamer and stimulates transcription, possibly by promoting nucleosome instability. Asymmetric dimethylation at Arg-18 (H3R17me2a) is linked to gene activation. Asymmetric dimethylation at Arg-3 (H3R2me2a) by PRMT6 is linked to gene repression and is mutually exclusive with H3 Lys-5 methylation (H3K4me2 and H3K4me3). H3R2me2a is present at the 3' of genes regardless of their transcription state and is enriched on inactive promoters, while it is absent on active promoters. Post-translationally, methylation at Lys-5 (H3K4me) and Lys-80 (H3K79me) are linked to gene activation. Methylation at Lys-5 (H3K4me) facilitates subsequent acetylation of H3 and H4. Methylation at Lys-80 (H3K79me) is associated with DNA double-strand break (DSB) responses and is a specific target for TP53BP1. Methylation at Lys-10 (H3K9me) and Lys-28 (H3K27me) are linked to gene repression. Methylation at Lys-10 (H3K9me) is a specific target for HP1 proteins (CBX1, CBX3 and CBX5) and prevents subsequent phosphorylation at Ser-11 (H3S10ph) and acetylation of H3 and H4. Methylation at Lys-5 (H3K4me) and Lys-80 (H3K79me) require preliminary monoubiquitination of H2B at 'Lys-120'. In terms of processing, phosphorylated at Thr-4 (H3T3ph) by HASPIN during prophase and dephosphorylated during anaphase. Phosphorylation at Ser-11 (H3S10ph) by aurkb is crucial for chromosome condensation and cell-cycle progression during mitosis and meiosis. In addition phosphorylation at Ser-11 (H3S10ph) by rps6ka4 and rps6ka5 is important during interphase because it enables the transcription of genes following external stimulation, like mitogens, stress, growth factors or UV irradiation and result in the activation of genes, such as c-fos and c-jun. Phosphorylation at Ser-11 (H3S10ph), which is linked to gene activation, prevents methylation at Lys-10 (H3K9me) but facilitates acetylation of H3 and H4. Phosphorylation at Ser-11 (H3S10ph) by aurkb mediates the dissociation of HP1 proteins (cbx1, cbx3 and cbx5) from heterochromatin. Phosphorylation at Ser-11 (H3S10ph) is also an essential regulatory mechanism for neoplastic cell transformation. Phosphorylation at Thr-7 (H3T6ph) by prkcb is a specific tag for epigenetic transcriptional activation that prevents demethylation of Lys-5 (H3K4me) by lsd1/kdm1a. At centromeres, specifically phosphorylated at Thr-12 (H3T11ph) from prophase to early anaphase, by DAPK3 and PKN1. Phosphorylation at Thr-12 (H3T11ph) by PKN1 or isoform M2 of PKM (PKM2) is a specific tag for epigenetic transcriptional activation that promotes demethylation of Lys-10 (H3K9me) by kdm4c/jmjd2c. Phosphorylation at Tyr-42 (H3Y41ph) by jak2 promotes exclusion of cbx5 (HP1 alpha) from chromatin. Lysine deamination at Lys-5 (H3K4all) to form allysine only takes place on H3K4me3 and results in gene repression. Post-translationally, butyrylation of histones marks active promoters and competes with histone acetylation. It is present during late spermatogenesis. In terms of processing, succinylation at Lys-80 (H3K79succ) by KAT2A takes place with a maximum frequency around the transcription start sites of genes. It gives a specific tag for epigenetic transcription activation. Desuccinylation at Lys-123 (H3K122succ) by SIRT7 in response to DNA damage promotes chromatin condensation and double-strand breaks (DSBs) repair. Serine ADP-ribosylation constitutes the primary form of ADP-ribosylation of proteins in response to DNA damage. Serine ADP-ribosylation at Ser-11 (H3S10ADPr) is mutually exclusive with phosphorylation at Ser-11 (H3S10ph) and impairs acetylation at Lys-10 (H3K9ac).

It is found in the nucleus. The protein resides in the chromosome. In terms of biological role, core component of nucleosome. Nucleosomes wrap and compact DNA into chromatin, limiting DNA accessibility to the cellular machineries which require DNA as a template. Histones thereby play a central role in transcription regulation, DNA repair, DNA replication and chromosomal stability. DNA accessibility is regulated via a complex set of post-translational modifications of histones, also called histone code, and nucleosome remodeling. The polypeptide is Histone H3.3C (h3-5) (Xenopus laevis (African clawed frog)).